The chain runs to 99 residues: Large ribosomal subunit protein eL30 (99 aa).

This sequence belongs to the eukaryotic ribosomal protein eL30 family.

This is Large ribosomal subunit protein eL30 from Methanobrevibacter smithii (strain ATCC 35061 / DSM 861 / OCM 144 / PS).